Consider the following 293-residue polypeptide: Bifunctional protein FolD (293 aa).

NADP(+)-binding positions include 165-167 (GRS), threonine 194, and valine 235.

It belongs to the tetrahydrofolate dehydrogenase/cyclohydrolase family. In terms of assembly, homodimer.

It carries out the reaction (6R)-5,10-methylene-5,6,7,8-tetrahydrofolate + NADP(+) = (6R)-5,10-methenyltetrahydrofolate + NADPH. The catalysed reaction is (6R)-5,10-methenyltetrahydrofolate + H2O = (6R)-10-formyltetrahydrofolate + H(+). The protein operates within one-carbon metabolism; tetrahydrofolate interconversion. Functionally, catalyzes the oxidation of 5,10-methylenetetrahydrofolate to 5,10-methenyltetrahydrofolate and then the hydrolysis of 5,10-methenyltetrahydrofolate to 10-formyltetrahydrofolate. The protein is Bifunctional protein FolD of Syntrophus aciditrophicus (strain SB).